A 915-amino-acid chain; its full sequence is Isoleucine--tRNA ligase (915 aa).

The 'HIGH' region signature appears at 58–68 (PYANGHLHIGH). Glu568 is a binding site for L-isoleucyl-5'-AMP. Positions 609–613 (KMSKS) match the 'KMSKS' region motif. Lys612 contributes to the ATP binding site. Residues Cys892, Cys895, Cys907, and Cys910 each coordinate Zn(2+).

The protein belongs to the class-I aminoacyl-tRNA synthetase family. IleS type 1 subfamily. As to quaternary structure, monomer. Requires Zn(2+) as cofactor.

It localises to the cytoplasm. The catalysed reaction is tRNA(Ile) + L-isoleucine + ATP = L-isoleucyl-tRNA(Ile) + AMP + diphosphate. Its function is as follows. Catalyzes the attachment of isoleucine to tRNA(Ile). As IleRS can inadvertently accommodate and process structurally similar amino acids such as valine, to avoid such errors it has two additional distinct tRNA(Ile)-dependent editing activities. One activity is designated as 'pretransfer' editing and involves the hydrolysis of activated Val-AMP. The other activity is designated 'posttransfer' editing and involves deacylation of mischarged Val-tRNA(Ile). The protein is Isoleucine--tRNA ligase of Wolinella succinogenes (strain ATCC 29543 / DSM 1740 / CCUG 13145 / JCM 31913 / LMG 7466 / NCTC 11488 / FDC 602W) (Vibrio succinogenes).